A 113-amino-acid polypeptide reads, in one-letter code: Large ribosomal subunit protein bL19 (113 aa).

Belongs to the bacterial ribosomal protein bL19 family.

Functionally, this protein is located at the 30S-50S ribosomal subunit interface and may play a role in the structure and function of the aminoacyl-tRNA binding site. This is Large ribosomal subunit protein bL19 from Nocardia farcinica (strain IFM 10152).